The chain runs to 455 residues: Bifunctional protein GlmU (455 aa).

A pyrophosphorylase region spans residues 1–226; sequence MSLDIVILAA…PMEVQGANDR (226 aa). UDP-N-acetyl-alpha-D-glucosamine contacts are provided by residues 8–11, Lys22, Gln73, 78–79, 99–101, Gly136, Glu151, Asn166, and Asn224; these read LAAG, GT, and YGD. Asp101 is a Mg(2+) binding site. Asn224 contacts Mg(2+). The tract at residues 227 to 247 is linker; sequence RQLSELERHYQLREGRRLMAQ. The N-acetyltransferase stretch occupies residues 248 to 455; that stretch reads GVTLRDPARF…WKRPEKIKKS (208 aa). Arg330 and Lys348 together coordinate UDP-N-acetyl-alpha-D-glucosamine. Residue His360 is the Proton acceptor of the active site. UDP-N-acetyl-alpha-D-glucosamine-binding residues include Tyr363 and Asn374. Residues Ala377, 383 to 384, Ser402, Ala420, and Arg437 each bind acetyl-CoA; that span reads NY.

The protein in the N-terminal section; belongs to the N-acetylglucosamine-1-phosphate uridyltransferase family. This sequence in the C-terminal section; belongs to the transferase hexapeptide repeat family. In terms of assembly, homotrimer. Mg(2+) serves as cofactor.

The protein localises to the cytoplasm. It carries out the reaction alpha-D-glucosamine 1-phosphate + acetyl-CoA = N-acetyl-alpha-D-glucosamine 1-phosphate + CoA + H(+). It catalyses the reaction N-acetyl-alpha-D-glucosamine 1-phosphate + UTP + H(+) = UDP-N-acetyl-alpha-D-glucosamine + diphosphate. Its pathway is nucleotide-sugar biosynthesis; UDP-N-acetyl-alpha-D-glucosamine biosynthesis; N-acetyl-alpha-D-glucosamine 1-phosphate from alpha-D-glucosamine 6-phosphate (route II): step 2/2. It functions in the pathway nucleotide-sugar biosynthesis; UDP-N-acetyl-alpha-D-glucosamine biosynthesis; UDP-N-acetyl-alpha-D-glucosamine from N-acetyl-alpha-D-glucosamine 1-phosphate: step 1/1. The protein operates within bacterial outer membrane biogenesis; LPS lipid A biosynthesis. In terms of biological role, catalyzes the last two sequential reactions in the de novo biosynthetic pathway for UDP-N-acetylglucosamine (UDP-GlcNAc). The C-terminal domain catalyzes the transfer of acetyl group from acetyl coenzyme A to glucosamine-1-phosphate (GlcN-1-P) to produce N-acetylglucosamine-1-phosphate (GlcNAc-1-P), which is converted into UDP-GlcNAc by the transfer of uridine 5-monophosphate (from uridine 5-triphosphate), a reaction catalyzed by the N-terminal domain. This is Bifunctional protein GlmU from Pseudomonas entomophila (strain L48).